The chain runs to 491 residues: Delayed-rectifier potassium channel regulatory subunit KCNS3 (491 aa).

Residues 1-182 (MVFGEFFHRP…IRMENPAYCL (182 aa)) are Cytoplasmic-facing. A helical transmembrane segment spans residues 183 to 204 (SAKLIAISSLSVVLASIVAMCV). Residues 205–220 (HSMSEFQNEDGEVDDP) are Extracellular-facing. A helical membrane pass occupies residues 221 to 243 (VLEGVEIACIAWFTGELAVRLAA). Residues 244-254 (APCQKKFWKNP) lie on the Cytoplasmic side of the membrane. A helical membrane pass occupies residues 255-275 (LNIIDFVSIIPFYATLAVDTK). Over 276 to 285 (EEESEDIENM) the chain is Extracellular. A helical; Voltage-sensor membrane pass occupies residues 286 to 306 (GKVVQILRLMRIFRILKLARH). The Cytoplasmic segment spans residues 307 to 321 (SVGLRSLGATLRHSY). The helical transmembrane segment at 322–343 (HEVGLLLLFLSVGISIFSVLIY) threads the bilayer. The Extracellular portion of the chain corresponds to 344 to 357 (SVEKDDHTSSLTSI). An intramembrane region (helical) is located at residues 358 to 369 (PICWWWATISMT). Positions 370–375 (TVGYGD) match the Selectivity filter motif. Residues 370–377 (TVGYGDTH) lie within the membrane without spanning it. The Extracellular segment spans residues 378-384 (PVTLAGK). Residues 385 to 413 (LIASTCIICGILVVALPITIIFNKFSKYY) form a helical membrane-spanning segment. Residues 414–491 (QKQKDIDVDQ…TTSLENCTAK (78 aa)) lie on the Cytoplasmic side of the membrane.

Belongs to the potassium channel family. S (TC 1.A.1.2) subfamily. Kv9.3/KCNS3 sub-subfamily. Heterotetramer with KCNB1. Does not form homomultimers. As to expression, detected in whole normal term placental and placental chorionic plate arteries and veins. Detected in syncytiotrophoblast and in blood vessel endothelium within intermediate villi and chorionic plate (at protein level). Detected in most tissues, but not in peripheral blood lymphocytes. The highest levels of expression are in lung.

It is found in the cell membrane. In terms of biological role, potassium channel regulatory subunit that modulates the delayed rectifier potassium channel activity of KCNB1 by namely slowing down the deactivation and inactivation time constants. While it does not form functional channel on its own, it can form functional heterotetrameric channels with KCNB1. This chain is Delayed-rectifier potassium channel regulatory subunit KCNS3, found in Homo sapiens (Human).